Consider the following 314-residue polypeptide: Zinc-binding alcohol dehydrogenase domain-containing protein cipB (314 aa).

Belongs to the zinc-containing alcohol dehydrogenase family.

Functionally, involved in osmoadaptation. In Emericella nidulans (strain FGSC A4 / ATCC 38163 / CBS 112.46 / NRRL 194 / M139) (Aspergillus nidulans), this protein is Zinc-binding alcohol dehydrogenase domain-containing protein cipB (cipB).